Here is a 285-residue protein sequence, read N- to C-terminus: Putative cytochrome c peroxidase, mitochondrial (285 aa).

Histidine 37 serves as the catalytic Proton acceptor. Histidine 161 serves as a coordination point for heme b. Tryptophan 177 serves as the catalytic Tryptophan radical intermediate.

This sequence belongs to the peroxidase family. Cytochrome c peroxidase subfamily. As to quaternary structure, forms a one-to-one complex with cytochrome c. Heme b is required as a cofactor.

It is found in the mitochondrion matrix. Its subcellular location is the mitochondrion intermembrane space. The enzyme catalyses 2 Fe(II)-[cytochrome c] + H2O2 + 2 H(+) = 2 Fe(III)-[cytochrome c] + 2 H2O. In terms of biological role, destroys radicals which are normally produced within the cells and which are toxic to biological systems. This Yarrowia lipolytica (strain CLIB 122 / E 150) (Yeast) protein is Putative cytochrome c peroxidase, mitochondrial.